We begin with the raw amino-acid sequence, 556 residues long: Oxygen-dependent choline dehydrogenase (556 aa).

An FAD-binding site is contributed by 4–33; the sequence is DYIIIGAGSAGNVLATRLTEDPNTTVLLLE. Histidine 473 (proton acceptor) is an active-site residue.

Belongs to the GMC oxidoreductase family. Requires FAD as cofactor.

The catalysed reaction is choline + A = betaine aldehyde + AH2. The enzyme catalyses betaine aldehyde + NAD(+) + H2O = glycine betaine + NADH + 2 H(+). Its pathway is amine and polyamine biosynthesis; betaine biosynthesis via choline pathway; betaine aldehyde from choline (cytochrome c reductase route): step 1/1. Involved in the biosynthesis of the osmoprotectant glycine betaine. Catalyzes the oxidation of choline to betaine aldehyde and betaine aldehyde to glycine betaine at the same rate. This chain is Oxygen-dependent choline dehydrogenase, found in Escherichia coli O127:H6 (strain E2348/69 / EPEC).